The sequence spans 345 residues: Viral Fc-gamma receptor-like protein UL119 (345 aa).

The first 23 residues, 1-23 (MCSVLAIALVVALLGDMHPGVKS), serve as a signal peptide directing secretion. Residues 23-43 (SSTTSAVTSPSNTTVTSTTSI) form a disordered region. Residues 24-293 (STTSAVTSPS…IKSDPLFEDR (270 aa)) lie on the Virion surface side of the membrane. Residues asparagine 34, asparagine 48, asparagine 95, asparagine 104, asparagine 148, asparagine 179, asparagine 198, asparagine 217, asparagine 225, asparagine 241, asparagine 244, and asparagine 260 are each glycosylated (N-linked (GlcNAc...) asparagine; by host). In terms of domain architecture, Ig-like V-type spans 91-190 (QVSLNATCKV…TWDLFTYPIY (100 aa)). The chain crosses the membrane as a helical span at residues 294–314 (LLAYGVLAFLVFMVIILLYVT). The Intravirion segment spans residues 315 to 345 (YMLARRRDWSYKRLEEPVEEKKHPVPYFKQW).

The protein resides in the virion membrane. Serves as a receptor for the Fc part of human IgG. May thus be involved in interfering with host Ig-mediated immune responses. This Homo sapiens (Human) protein is Viral Fc-gamma receptor-like protein UL119 (UL119/UL118).